A 134-amino-acid polypeptide reads, in one-letter code: Early E3B 14.9 kDa protein (134 aa).

Residues 1–19 form the signal peptide; the sequence is MQAMLPVILILLLPCIALA. The chain crosses the membrane as a helical span at residues 54–78; sequence YWIVIVGIINILSCTFFSITIYPTF.

Belongs to the adenoviridae E3_14 family. In terms of processing, phosphorylated on serine; O-glycosylated, but not N-glycosylated.

It localises to the host membrane. Functionally, down-regulates the EGF receptor and prevents cytolysis by TNF. The chain is Early E3B 14.9 kDa protein from Homo sapiens (Human).